The sequence spans 536 residues: ATPase expression protein 3 (536 aa).

2 PPR repeats span residues 212 to 246 (TTTMFNDLIYYFGKKSDYASCREYYSQMKLEKKTP) and 386 to 421 (TTGSVNILLNAAAEKGRLDLAVLTYNSMKVQLGVTP).

It localises to the mitochondrion inner membrane. In terms of biological role, required for respiration. In Eremothecium gossypii (strain ATCC 10895 / CBS 109.51 / FGSC 9923 / NRRL Y-1056) (Yeast), this protein is ATPase expression protein 3 (AEP3).